We begin with the raw amino-acid sequence, 202 residues long: Small ribosomal subunit protein uS4 (202 aa).

Residues 15–42 form a disordered region; that stretch reads LGDLPGLTRKAAKRSYPPGQHGQARRKR. The S4 RNA-binding domain maps to 90–152; it reads NRLDNVCFRL…KCSKQLAEGN (63 aa).

The protein belongs to the universal ribosomal protein uS4 family. As to quaternary structure, part of the 30S ribosomal subunit. Contacts protein S5. The interaction surface between S4 and S5 is involved in control of translational fidelity.

One of the primary rRNA binding proteins, it binds directly to 16S rRNA where it nucleates assembly of the body of the 30S subunit. Functionally, with S5 and S12 plays an important role in translational accuracy. The polypeptide is Small ribosomal subunit protein uS4 (Synechococcus sp. (strain WH7803)).